Reading from the N-terminus, the 576-residue chain is CDPK-related kinase 1 (576 aa).

A disordered region spans residues 1–39; that stretch reads MGICHGKPVEQQSKSLPVSGETNEAPTNSQPPAKSSGFP. G2 is lipidated: N-myristoyl glycine. Polar residues predominate over residues 10-33; it reads EQQSKSLPVSGETNEAPTNSQPPA. The 263-residue stretch at 123–385 folds into the Protein kinase domain; sequence YEIDGEVGRG…AAQALCHPWL (263 aa). ATP contacts are provided by residues 129–137 and K155; that span reads VGRGHFGYT. D251 serves as the catalytic Proton acceptor. Phosphoserine is present on S291. At S333 the chain carries Phosphoserine; by CPK1 and CPK34. Residues 390–420 form an autoinhibitory domain region; that stretch reads ELKIPSDMIIYKLVKVYIMSTSLRKSALAAL. Residues 409–429 form a calmodulin binding (CaMBD) region; the sequence is STSLRKSALAALAKTLTVPQL. EF-hand domains follow at residues 427-463, 464-499, 500-539, and 542-571; these read PQLAYLREQFTLLGPSKNGYISMQNYKTAILKSSTDA, MKDSRVFDFVHMISCLQYKKLDFEEFCASALSVYQL, EAMETWEQHARRAYELFEKDGNRPIMIEELASELGLGPSV, and HVVLQDWIRHSDGKLSFLGFVRLLHGVSSR. Ca(2+) is bound by residues S442, N444, Y446, K483, E488, D519, N521, E528, D553, and K555. Phosphoserine is present on S557.

It belongs to the protein kinase superfamily. Ser/Thr protein kinase family. CDPK subfamily. Binds calmodulin (CaM) in a calcium-dependent manner. Interacts with HSFA1A. Post-translationally, autophosphorylated.

Its subcellular location is the membrane. The catalysed reaction is L-seryl-[protein] + ATP = O-phospho-L-seryl-[protein] + ADP + H(+). The enzyme catalyses L-threonyl-[protein] + ATP = O-phospho-L-threonyl-[protein] + ADP + H(+). Its activity is regulated as follows. Activated by calcium and calmodulin. Autophosphorylation may play an important role in the regulation of the kinase activity. In terms of biological role, may play a role in signal transduction pathways that involve calcium as a second messenger. Serine/threonine kinase that phosphorylates histone H3. Confers thermotolerance; involved in the heat-shock-mediated calmodulin-dependent signal transduction leading to the activation of heat-shock transcription factors (HSFs); phosphorylates HSFA1A. The polypeptide is CDPK-related kinase 1 (CRK1) (Arabidopsis thaliana (Mouse-ear cress)).